Consider the following 83-residue polypeptide: Acyl carrier protein MmaB (83 aa).

The Carrier domain occupies 3–83 (DPVRQRILLA…LSQSELESPT (81 aa)). O-(pantetheine 4'-phosphoryl)serine is present on Ser39.

It belongs to the acyl carrier protein (ACP) family. Pantetheine 4'-phosphate is required as a cofactor.

It functions in the pathway lipid metabolism; fatty acid metabolism. In terms of biological role, acyl-carrier protein (ACP) involved in the biosynthesis of a unique class of isonitrile lipopeptides (INLPs) that seem to play a role in metal acquisition in M.marinum. Is the dedicated ACP for the loading of activated acyl groups catalyzed by MmaC. The protein is Acyl carrier protein MmaB of Mycobacterium marinum (strain ATCC BAA-535 / M).